Consider the following 198-residue polypeptide: ATP-dependent Clp protease proteolytic subunit 1 (198 aa).

The active-site Nucleophile is S98. Residue H123 is part of the active site.

The protein belongs to the peptidase S14 family. In terms of assembly, fourteen ClpP subunits assemble into 2 heptameric rings which stack back to back to give a disk-like structure with a central cavity, resembling the structure of eukaryotic proteasomes.

The protein resides in the cytoplasm. It carries out the reaction Hydrolysis of proteins to small peptides in the presence of ATP and magnesium. alpha-casein is the usual test substrate. In the absence of ATP, only oligopeptides shorter than five residues are hydrolyzed (such as succinyl-Leu-Tyr-|-NHMec, and Leu-Tyr-Leu-|-Tyr-Trp, in which cleavage of the -Tyr-|-Leu- and -Tyr-|-Trp bonds also occurs).. Functionally, cleaves peptides in various proteins in a process that requires ATP hydrolysis. Has a chymotrypsin-like activity. Plays a major role in the degradation of misfolded proteins. ClpXP1 is involved in the complete degradation of the Site-2 clipped anti-sigma-W factor RsiW. This results in the release of SigW and the transcription activation of the genes under the control of the sigma-W factor. This is ATP-dependent Clp protease proteolytic subunit 1 from Bacillus licheniformis (strain ATCC 14580 / DSM 13 / JCM 2505 / CCUG 7422 / NBRC 12200 / NCIMB 9375 / NCTC 10341 / NRRL NRS-1264 / Gibson 46).